We begin with the raw amino-acid sequence, 486 residues long: N-succinylglutamate 5-semialdehyde dehydrogenase (486 aa).

Position 221-226 (221-226 (GSSATG)) interacts with NAD(+). Residues E244 and C278 contribute to the active site.

Belongs to the aldehyde dehydrogenase family. AstD subfamily.

The catalysed reaction is N-succinyl-L-glutamate 5-semialdehyde + NAD(+) + H2O = N-succinyl-L-glutamate + NADH + 2 H(+). The protein operates within amino-acid degradation; L-arginine degradation via AST pathway; L-glutamate and succinate from L-arginine: step 4/5. Its function is as follows. Catalyzes the NAD-dependent reduction of succinylglutamate semialdehyde into succinylglutamate. The sequence is that of N-succinylglutamate 5-semialdehyde dehydrogenase from Chromobacterium violaceum (strain ATCC 12472 / DSM 30191 / JCM 1249 / CCUG 213 / NBRC 12614 / NCIMB 9131 / NCTC 9757 / MK).